Consider the following 565-residue polypeptide: DNA-dependent metalloprotease SPRTN (565 aa).

The SprT-like domain occupies 23–130; the sequence is RALFLEFNDT…RTGANISVYH (108 aa). Histidine 88 contacts Zn(2+). Glutamate 89 is an active-site residue. Residues histidine 92 and histidine 107 each contribute to the Zn(2+) site. The disordered stretch occupies residues 191–219; that stretch reads EPENYPQKRKRKNDPTISEVNSSSHVKGK. A compositionally biased stretch (polar residues) spans 205–215; the sequence is PTISEVNSSSH. The SHP-box signature appears at 231 to 239; the sequence is FSGTGYKLF. Residues 288–295 carry the PIP-box motif; sequence STPAQSIL. The interval 349-389 is disordered; sequence TLPSPSIQSTSQKPQKDISFGFTLPSQSFPSTSPGSNSENK. Polar residues-rich tracts occupy residues 351 to 361 and 372 to 386; these read PSPSIQSTSQK and LPSQ…GSNS. The UBZ4-type 1 zinc-finger motif lies at 436–463; sequence KVSCPVCGTEVLECKINDHLDTCTSSGP. Zn(2+) contacts are provided by cysteine 439, cysteine 442, histidine 454, and cysteine 458. A Nuclear localization signal motif is present at residues 476–499; that stretch reads QSFPSTSQGSNSAIKEPLYKKLQI. The UBZ4-type 2 zinc finger occupies 537 to 564; it reads KVCCPVCGTDVLQDKINDHLDTCLQNCN. Cysteine 540, cysteine 543, histidine 555, and cysteine 559 together coordinate Zn(2+).

This sequence belongs to the Spartan family. Homodimer. Requires Zn(2+) as cofactor. Autocatalytically cleaved in response to double-stranded DNA-binding: autocatalytic cleavage takes place in trans and leads to inactivation.

It localises to the nucleus. Its subcellular location is the chromosome. Its activity is regulated as follows. DNA-binding activates the protease activity: single-stranded DNA-binding specifically activates ability to cleave covalent DNA-protein cross-links (DPCs). In contrast, double-stranded DNA-binding specifically activates autocatalytic cleavage, and subsequent inactivation. Its function is as follows. DNA-dependent metalloendopeptidase that mediates the proteolytic cleavage of covalent DNA-protein cross-links (DPCs) during DNA synthesis, thereby playing a key role in maintaining genomic integrity. DPCs are highly toxic DNA lesions that interfere with essential chromatin transactions, such as replication and transcription, and which are induced by reactive agents, such as UV light or formaldehyde. Associates with the DNA replication machinery and specifically removes DPCs during DNA synthesis. Catalyzes proteolytic cleavage of the hmces DNA-protein cross-link following unfolding by the brip1/fancj helicase. Acts as a pleiotropic protease for DNA-binding proteins cross-linked with DNA, such as top1, top2a, histones H3 and H4. Mediates degradation of DPCs that are not ubiquitinated, while it is not able to degrade ubiquitinated DPCs. SPRTN activation requires polymerase collision with DPCs followed by helicase bypass of DPCs. May also act as a 'reader' of ubiquitinated pcna: facilitates chromatin association of rad18 and is required for efficient pcna monoubiquitination, promoting a feed-forward loop to enhance pcna ubiquitination and translesion DNA synthesis. Acts as a regulator of translesion DNA synthesis by recruiting vcp/p97 to sites of DNA damage. The chain is DNA-dependent metalloprotease SPRTN from Xenopus laevis (African clawed frog).